The chain runs to 352 residues: Glycerol-1-phosphate dehydrogenase [NAD(P)+] (352 aa).

NAD(+) is bound by residues 98–102 (GKPID) and 120–123 (TAAS). Residue Asp-125 coordinates substrate. Ser-129 contacts NAD(+). Asp-172 lines the substrate pocket. Residues Asp-172 and His-252 each coordinate Zn(2+). His-256 contributes to the substrate binding site. Residue His-268 participates in Zn(2+) binding.

Belongs to the glycerol-1-phosphate dehydrogenase family. It depends on Zn(2+) as a cofactor.

Its subcellular location is the cytoplasm. The catalysed reaction is sn-glycerol 1-phosphate + NAD(+) = dihydroxyacetone phosphate + NADH + H(+). The enzyme catalyses sn-glycerol 1-phosphate + NADP(+) = dihydroxyacetone phosphate + NADPH + H(+). It participates in membrane lipid metabolism; glycerophospholipid metabolism. In terms of biological role, catalyzes the NAD(P)H-dependent reduction of dihydroxyacetonephosphate (DHAP or glycerone phosphate) to glycerol 1-phosphate (G1P). The G1P thus generated is used as the glycerophosphate backbone of phospholipids in the cellular membranes of Archaea. This chain is Glycerol-1-phosphate dehydrogenase [NAD(P)+], found in Natronomonas pharaonis (strain ATCC 35678 / DSM 2160 / CIP 103997 / JCM 8858 / NBRC 14720 / NCIMB 2260 / Gabara) (Halobacterium pharaonis).